The sequence spans 230 residues: GTP cyclohydrolase III (230 aa).

It belongs to the archaeal-type GTP cyclohydrolase family.

The enzyme catalyses GTP + 3 H2O = 2-amino-5-formylamino-6-(5-phospho-D-ribosylamino)pyrimidin-4(3H)-one + 2 phosphate + 2 H(+). Catalyzes the formation of 2-amino-5-formylamino-6-ribofuranosylamino-4(3H)-pyrimidinone ribonucleotide monophosphate and inorganic phosphate from GTP. Also has an independent pyrophosphate phosphohydrolase activity. The protein is GTP cyclohydrolase III of Saccharolobus islandicus (strain M.16.27) (Sulfolobus islandicus).